The following is a 564-amino-acid chain: Proline--tRNA ligase (564 aa).

Belongs to the class-II aminoacyl-tRNA synthetase family. ProS type 1 subfamily. As to quaternary structure, homodimer.

Its subcellular location is the cytoplasm. It catalyses the reaction tRNA(Pro) + L-proline + ATP = L-prolyl-tRNA(Pro) + AMP + diphosphate. Catalyzes the attachment of proline to tRNA(Pro) in a two-step reaction: proline is first activated by ATP to form Pro-AMP and then transferred to the acceptor end of tRNA(Pro). As ProRS can inadvertently accommodate and process non-cognate amino acids such as alanine and cysteine, to avoid such errors it has two additional distinct editing activities against alanine. One activity is designated as 'pretransfer' editing and involves the tRNA(Pro)-independent hydrolysis of activated Ala-AMP. The other activity is designated 'posttransfer' editing and involves deacylation of mischarged Ala-tRNA(Pro). The misacylated Cys-tRNA(Pro) is not edited by ProRS. The chain is Proline--tRNA ligase from Bacillus subtilis (strain 168).